The sequence spans 700 residues: Constitutive coactivator of peroxisome proliferator-activated receptor gamma (700 aa).

It belongs to the constitutive coactivator of PPAR-gamma family. In terms of assembly, interacts with ESR1 and RXRA. Interacts with PPARG; in a ligand-independent manner.

The protein localises to the nucleus. In terms of biological role, functions as a transactivator of PPARG and ESR1. Functions in adipogenesis through PPARG activation. This chain is Constitutive coactivator of peroxisome proliferator-activated receptor gamma (FAM120B), found in Bos taurus (Bovine).